Consider the following 173-residue polypeptide: Shikimate kinase (173 aa).

An ATP-binding site is contributed by 14–19 (GAGKST). Ser18 lines the Mg(2+) pocket. 3 residues coordinate substrate: Asp36, Arg60, and Gly82. An ATP-binding site is contributed by Arg120. Arg140 is a substrate binding site. Gln157 contacts ATP.

The protein belongs to the shikimate kinase family. As to quaternary structure, monomer. The cofactor is Mg(2+).

It is found in the cytoplasm. The enzyme catalyses shikimate + ATP = 3-phosphoshikimate + ADP + H(+). It participates in metabolic intermediate biosynthesis; chorismate biosynthesis; chorismate from D-erythrose 4-phosphate and phosphoenolpyruvate: step 5/7. Its function is as follows. Catalyzes the specific phosphorylation of the 3-hydroxyl group of shikimic acid using ATP as a cosubstrate. This chain is Shikimate kinase, found in Buchnera aphidicola subsp. Schizaphis graminum (strain Sg).